The primary structure comprises 44 residues: METPALVATVFVSCLVLSITGYSLYIGFGPPSKELRDPFDEHED.

The chain crosses the membrane as a helical span at residues Val7–Gly29.

It belongs to the PsbN family.

It is found in the plastid. The protein localises to the chloroplast thylakoid membrane. May play a role in photosystem I and II biogenesis. This is Protein PsbN from Nephroselmis olivacea (Green alga).